Reading from the N-terminus, the 234-residue chain is Viral Fc-gamma receptor-like protein IR11 (234 aa).

The signal sequence occupies residues 1 to 23 (MQTYSTPLTLVIVTSLFLFTTQG). Residues 24-122 (SSSNAVEPTK…VKDTGVYLLQ (99 aa)) form the Ig-like V-type domain. Over 24 to 182 (SSSNAVEPTK…DLKRQWSGLS (159 aa)) the chain is Extracellular. N-linked (GlcNAc...) asparagine; by host glycans are attached at residues Asn-57, Asn-105, and Asn-110. A helical transmembrane segment spans residues 183–203 (LHCAWVSGMMIFVGALVICFL). Topologically, residues 204 to 234 (RSQRIGEQDAEHLRTDLDTEPLLLTVDGDLQ) are cytoplasmic.

The protein belongs to the RL11 family.

The protein localises to the membrane. In Homo sapiens (Human), this protein is Viral Fc-gamma receptor-like protein IR11.